The chain runs to 235 residues: H2HPP isomerase (235 aa).

Cupin type-2 domains are found at residues 41–106 (VPPH…AIDI) and 151–216 (KIPG…KSIN). Residues His-50, His-52, Gln-56, His-91, His-162, His-164, Gln-168, and His-202 each contribute to the a divalent metal cation site. A substrate-binding site is contributed by Tyr-223.

In terms of assembly, monomer. Fe(2+) is required as a cofactor. The cofactor is Co(2+).

The protein resides in the cytoplasm. The catalysed reaction is 3-[(4R)-4-hydroxycyclohexa-1,5-dien-1-yl]-2-oxopropanoate = 3-[(1E,4R)-4-hydroxycyclohex-2-en-1-ylidene]pyruvate. The protein operates within antibiotic biosynthesis; bacilysin biosynthesis. Its function is as follows. Part of the bacABCDEF operon responsible for the biosynthesis of the nonribosomally synthesized dipeptide antibiotic bacilysin, composed of L-alanine and L-anticapsin. Bacilysin is an irreversible inactivator of the glutaminase domain of glucosamine synthetase. BacB catalyzes the allylic isomerization of the endocyclic-delta(4),delta(8)-7R-dihydro-hydroxyphenylpyruvate (en-H2HPP) to generate a mixture of 3E,7R- and 3Z, 7R-olefins (E/Z ration of 3/1) of the exocyclic-delta(3),delta(5)-dihydro-hydroxyphenylpyruvate (ex-H2HPP). In Bacillus subtilis (strain 168), this protein is H2HPP isomerase.